The following is a 218-amino-acid chain: Small ribosomal subunit protein uS3c (218 aa).

In terms of domain architecture, KH type-2 spans 43 to 118; the sequence is IKNYVQKNMR…KLNIAITRIA (76 aa).

It belongs to the universal ribosomal protein uS3 family. As to quaternary structure, part of the 30S ribosomal subunit.

It localises to the plastid. The protein resides in the chloroplast. The sequence is that of Small ribosomal subunit protein uS3c (rps3) from Buxus microphylla (Littleleaf boxwood).